The following is a 161-amino-acid chain: Globin CTT-VIIB-5/CTT-VIIB-9 (161 aa).

The N-terminal stretch at 1-16 is a signal peptide; that stretch reads MKFFAVLALCIVGAIA. The Globin domain maps to 18–161; it reads PLTADEASLV…NTFAIVVPRL (144 aa). Heme b contacts are provided by histidine 76 and histidine 111.

The protein belongs to the globin family. Homodimer.

This chain is Globin CTT-VIIB-5/CTT-VIIB-9 (CTT-7B5), found in Chironomus thummi thummi (Midge).